Consider the following 213-residue polypeptide: MDPKSKAPKRDETKGADDASGRRYLDGQLLIAMPVMEDERFARSVIYVCAHSSEGAMGIIVNRPAGSIDFPELLVQLEIIDKADQIKLPENAETMKVLKGGPVETGRGFVLHSSDFFIKDATLPIDEGICLTATVDILRAIARGAGPKHAILALGYAGWAPGQLETEIQGNGWLHCPADADLIFGGDIEAKYSRALHKIGIEPGMLSNEAGHA.

The disordered stretch occupies residues 1–20; it reads MDPKSKAPKRDETKGADDAS.

The protein belongs to the UPF0301 (AlgH) family.

This Rhodopseudomonas palustris (strain BisB18) protein is UPF0301 protein RPC_0788.